A 433-amino-acid chain; its full sequence is Homoserine dehydrogenase (433 aa).

NADPH is bound by residues Thr-12, Val-13, and Lys-102. Position 13 (Val-13) interacts with NAD(+). Residues Val-13 and Lys-102 each contribute to the NADP(+) site. Positions 126, 129, 131, and 133 each coordinate Na(+). Residues Gly-184 and Glu-187 each contribute to the NADP(+) site. L-homoserine contacts are provided by Glu-187 and Asp-198. Lys-202 (proton donor) is an active-site residue. Position 303 (Gly-303) interacts with NADPH. An NAD(+)-binding site is contributed by Gly-303. Gly-303 is a binding site for NADP(+). The ACT domain occupies 356 to 433 (YCRFLCADVP…EIPSVIRVLS (78 aa)).

It belongs to the homoserine dehydrogenase family. Requires a metal cation as cofactor.

It carries out the reaction L-homoserine + NADP(+) = L-aspartate 4-semialdehyde + NADPH + H(+). The enzyme catalyses L-homoserine + NAD(+) = L-aspartate 4-semialdehyde + NADH + H(+). The protein operates within amino-acid biosynthesis; L-methionine biosynthesis via de novo pathway; L-homoserine from L-aspartate: step 3/3. It participates in amino-acid biosynthesis; L-threonine biosynthesis; L-threonine from L-aspartate: step 3/5. Its function is as follows. Catalyzes the conversion of L-aspartate-beta-semialdehyde (L-Asa) to L-homoserine (L-Hse), the third step in the biosynthesis of threonine and methionine from aspartate. In Synechocystis sp. (strain ATCC 27184 / PCC 6803 / Kazusa), this protein is Homoserine dehydrogenase (hom).